The following is a 274-amino-acid chain: RsbT co-antagonist protein RsbRA (274 aa).

In terms of domain architecture, STAS spans Ser-150–Thr-265. Thr-171 and Thr-205 each carry phosphothreonine.

In terms of assembly, interacts with RsbRB and RsbS in the stressosome. The stressosome probably also contains RsbRC and RsbRD. Phosphorylated by RsbT. This threonine phosphorylation abrogates the ability of RsbRA to stimulate RsbT in vitro.

Functionally, acts as a positive regulator of sigma-B activity in response to salt and heat stress by stimulating the activity of the RsbT kinase toward RsbS in vitro. Its function is as follows. One of 4 functionally non-identical RsbR paralogs, it functions in the environmental signaling branch of the general stress response. Negative regulator of sigma-B activity. Non-phosphorylated RsbS binds to RsbT, preventing its association with RsbU. Requires any one of RsbRA, RsbRB, RsbRC or RsbRD to sequester RsbT. When RsbS and the RsbR paralog(s) are phosphorylated, they release RsbT, which can then bind and activate RsbU. In Bacillus subtilis (strain 168), this protein is RsbT co-antagonist protein RsbRA (rsbRA).